The chain runs to 348 residues: MDQAKSKALEAALSQIEKQFGKGSIMRLGSDRTMDIDVISTGSLGLDIALGVGGLPRGRIVEIYGPESSGKTTLTLSVIAEAQRQGLTCAFVDAEHALDPIYAAKLGVNIDELLCSQPDTGEQALEIVDILTRSGAVNLIVVDSVAALVPKAEIEGEIGDSHVGLAARMMSQAMRKITGNLKNSNTMCIFINQIRMKIGVMFGNPETTTGGNALKFYASVRLDIRRTGAVKEGEEVVGSETRVKVVKNKVAAPFRQAEFQIVYGQGISKAGEIVDLAVANNFVEKSGAWYSFEGNKIGQGKANTMKWLLENKPTMDKLEGMIREKLMSKPQAETSARLATQEELADDY.

65-72 (GPESSGKT) serves as a coordination point for ATP. Residues 328-348 (SKPQAETSARLATQEELADDY) are disordered.

The protein belongs to the RecA family.

It is found in the cytoplasm. Functionally, can catalyze the hydrolysis of ATP in the presence of single-stranded DNA, the ATP-dependent uptake of single-stranded DNA by duplex DNA, and the ATP-dependent hybridization of homologous single-stranded DNAs. It interacts with LexA causing its activation and leading to its autocatalytic cleavage. The protein is Protein RecA of Ectopseudomonas oleovorans (Pseudomonas oleovorans).